Here is a 349-residue protein sequence, read N- to C-terminus: Short-wave-sensitive opsin 1 (349 aa).

Residues 1-34 lie on the Extracellular side of the membrane; it reads MSKMPEEEEFYLFKNISSVGPWDGPQYHIAPVWA. The N-linked (GlcNAc...) asparagine glycan is linked to Asn15. The helical transmembrane segment at 35–59 threads the bilayer; sequence FQLQAAFMGIVFLAGLPLNSMVLVA. Over 60-71 the chain is Cytoplasmic; the sequence is TVRYKKLRHPLN. A helical membrane pass occupies residues 72 to 97; it reads YVLVNVSVGGFLLCIFSVLPVFVNSC. Residues 98–111 lie on the Extracellular side of the membrane; sequence NGYFVFGRHVCALE. A disulfide bond links Cys108 and Cys185. A helical membrane pass occupies residues 112–131; it reads GFLGTVAGLVTGWSLAFLAF. Topologically, residues 132-150 are cytoplasmic; it reads ERYIVICKPFGNFRFSSKH. Residues 151-174 traverse the membrane as a helical segment; sequence ALMVVLTTWTIGIGVSIPPFFGWS. The Extracellular segment spans residues 175–200; it reads RYIAEGLQCSCGPDWYTVGTKYRSEY. Residues 201-228 form a helical membrane-spanning segment; sequence YTWFLFIFCFIVPLSLICFSYAQLLRAL. Residues 229 to 250 are Cytoplasmic-facing; the sequence is KAVAAQQQESATTQKAEREVSR. A helical membrane pass occupies residues 251–274; it reads MVVVMVGSFCVCYVPYAALAMYMV. Over 275 to 282 the chain is Extracellular; it reads NNRNHGLD. A helical membrane pass occupies residues 283 to 307; the sequence is LRLVSIPAFFSKSSCIYNPIIYCFM. At Lys294 the chain carries N6-(retinylidene)lysine. Over 308–349 the chain is Cytoplasmic; sequence NKQFRACIMEMVCGKAMTDESDISSSQKTEVSTVSSSQVGPN.

This sequence belongs to the G-protein coupled receptor 1 family. Opsin subfamily. Post-translationally, phosphorylated on some or all of the serine and threonine residues present in the C-terminal region.

The protein resides in the cell membrane. Its subcellular location is the photoreceptor inner segment. It is found in the cell projection. It localises to the cilium. The protein localises to the photoreceptor outer segment. The protein resides in the cytoplasm. Its subcellular location is the perinuclear region. In terms of biological role, visual pigments are the light-absorbing molecules that mediate vision. They consist of an apoprotein, opsin, covalently linked to cis-retinal. Required for the maintenance of cone outer segment organization in the ventral retina, but not essential for the maintenance of functioning cone photoreceptors. Involved in ensuring correct abundance and localization of retinal membrane proteins. May increase spectral sensitivity in dim light. This chain is Short-wave-sensitive opsin 1 (OPN1SW), found in Saimiri boliviensis boliviensis (Bolivian squirrel monkey).